Consider the following 337-residue polypeptide: GTPase Obg (337 aa).

Residues Ser4–Leu162 form the Obg domain. Residues Ala163–Arg329 form the OBG-type G domain. Residues Gly169–Ser176, Phe194–Glu198, Asp216–Gly219, Ser283–Asp286, and Ser310–Phe312 contribute to the GTP site. Ser176 and Thr196 together coordinate Mg(2+).

It belongs to the TRAFAC class OBG-HflX-like GTPase superfamily. OBG GTPase family. In terms of assembly, monomer. It depends on Mg(2+) as a cofactor.

It is found in the cytoplasm. Its function is as follows. An essential GTPase which binds GTP, GDP and possibly (p)ppGpp with moderate affinity, with high nucleotide exchange rates and a fairly low GTP hydrolysis rate. Plays a role in control of the cell cycle, stress response, ribosome biogenesis and in those bacteria that undergo differentiation, in morphogenesis control. This chain is GTPase Obg, found in Azobacteroides pseudotrichonymphae genomovar. CFP2.